Here is a 405-residue protein sequence, read N- to C-terminus: Tryptophan synthase beta chain (405 aa).

Position 95 is an N6-(pyridoxal phosphate)lysine (K95).

It belongs to the TrpB family. As to quaternary structure, tetramer of two alpha and two beta chains. Pyridoxal 5'-phosphate is required as a cofactor.

It catalyses the reaction (1S,2R)-1-C-(indol-3-yl)glycerol 3-phosphate + L-serine = D-glyceraldehyde 3-phosphate + L-tryptophan + H2O. It participates in amino-acid biosynthesis; L-tryptophan biosynthesis; L-tryptophan from chorismate: step 5/5. The beta subunit is responsible for the synthesis of L-tryptophan from indole and L-serine. This chain is Tryptophan synthase beta chain, found in Pseudomonas entomophila (strain L48).